The primary structure comprises 175 residues: UPF0178 protein GOX1710 (175 aa).

The protein belongs to the UPF0178 family.

The polypeptide is UPF0178 protein GOX1710 (Gluconobacter oxydans (strain 621H) (Gluconobacter suboxydans)).